We begin with the raw amino-acid sequence, 397 residues long: Tryptophan synthase beta chain (397 aa).

Lys-86 is subject to N6-(pyridoxal phosphate)lysine.

Belongs to the TrpB family. Tetramer of two alpha and two beta chains. Pyridoxal 5'-phosphate is required as a cofactor.

The enzyme catalyses (1S,2R)-1-C-(indol-3-yl)glycerol 3-phosphate + L-serine = D-glyceraldehyde 3-phosphate + L-tryptophan + H2O. Its pathway is amino-acid biosynthesis; L-tryptophan biosynthesis; L-tryptophan from chorismate: step 5/5. Its function is as follows. The beta subunit is responsible for the synthesis of L-tryptophan from indole and L-serine. This is Tryptophan synthase beta chain from Tolumonas auensis (strain DSM 9187 / NBRC 110442 / TA 4).